An 830-amino-acid chain; its full sequence is DNA gyrase subunit A (830 aa).

In terms of domain architecture, Topo IIA-type catalytic spans 34-514; that stretch reads LPDVRDGLKP…NHSDINMEDL (481 aa). Tyr-122 acts as the O-(5'-phospho-DNA)-tyrosine intermediate in catalysis. A GyrA-box motif is present at residues 541–547; that stretch reads QRRGGKG.

The protein belongs to the type II topoisomerase GyrA/ParC subunit family. As to quaternary structure, heterotetramer, composed of two GyrA and two GyrB chains. In the heterotetramer, GyrA contains the active site tyrosine that forms a transient covalent intermediate with DNA, while GyrB binds cofactors and catalyzes ATP hydrolysis.

The protein localises to the cytoplasm. The catalysed reaction is ATP-dependent breakage, passage and rejoining of double-stranded DNA.. Functionally, a type II topoisomerase that negatively supercoils closed circular double-stranded (ds) DNA in an ATP-dependent manner to modulate DNA topology and maintain chromosomes in an underwound state. Negative supercoiling favors strand separation, and DNA replication, transcription, recombination and repair, all of which involve strand separation. Also able to catalyze the interconversion of other topological isomers of dsDNA rings, including catenanes and knotted rings. Type II topoisomerases break and join 2 DNA strands simultaneously in an ATP-dependent manner. The sequence is that of DNA gyrase subunit A from Buchnera aphidicola subsp. Acyrthosiphon pisum (strain APS) (Acyrthosiphon pisum symbiotic bacterium).